A 207-amino-acid polypeptide reads, in one-letter code: Thiamine-phosphate synthase (207 aa).

4-amino-2-methyl-5-(diphosphooxymethyl)pyrimidine-binding positions include 38-42 and Asn-70; that span reads QYRNK. Mg(2+)-binding residues include Asp-71 and Asp-90. Residue Ser-109 coordinates 4-amino-2-methyl-5-(diphosphooxymethyl)pyrimidine. Position 136 to 138 (136 to 138) interacts with 2-[(2R,5Z)-2-carboxy-4-methylthiazol-5(2H)-ylidene]ethyl phosphate; that stretch reads TAT. Lys-139 is a 4-amino-2-methyl-5-(diphosphooxymethyl)pyrimidine binding site. Residues Gly-165 and 185-186 each bind 2-[(2R,5Z)-2-carboxy-4-methylthiazol-5(2H)-ylidene]ethyl phosphate; that span reads VS.

The protein belongs to the thiamine-phosphate synthase family. Mg(2+) is required as a cofactor.

The catalysed reaction is 2-[(2R,5Z)-2-carboxy-4-methylthiazol-5(2H)-ylidene]ethyl phosphate + 4-amino-2-methyl-5-(diphosphooxymethyl)pyrimidine + 2 H(+) = thiamine phosphate + CO2 + diphosphate. The enzyme catalyses 2-(2-carboxy-4-methylthiazol-5-yl)ethyl phosphate + 4-amino-2-methyl-5-(diphosphooxymethyl)pyrimidine + 2 H(+) = thiamine phosphate + CO2 + diphosphate. It carries out the reaction 4-methyl-5-(2-phosphooxyethyl)-thiazole + 4-amino-2-methyl-5-(diphosphooxymethyl)pyrimidine + H(+) = thiamine phosphate + diphosphate. It participates in cofactor biosynthesis; thiamine diphosphate biosynthesis; thiamine phosphate from 4-amino-2-methyl-5-diphosphomethylpyrimidine and 4-methyl-5-(2-phosphoethyl)-thiazole: step 1/1. In terms of biological role, condenses 4-methyl-5-(beta-hydroxyethyl)thiazole monophosphate (THZ-P) and 2-methyl-4-amino-5-hydroxymethyl pyrimidine pyrophosphate (HMP-PP) to form thiamine monophosphate (TMP). This chain is Thiamine-phosphate synthase, found in Xanthomonas campestris pv. campestris (strain 8004).